Reading from the N-terminus, the 135-residue chain is Fluoride-specific ion channel FluC (135 aa).

4 consecutive transmembrane segments (helical) span residues 7-27 (IAAISLGASLGALARYGLGLA), 37-57 (IGTLAANLIAAYVVGVTIAYV), 70-90 (FMITGLAGGLSTFSTFTAELF), and 105-125 (LGLHVGGSLALLMLGMLTIGL). Residues Gly77 and Ser80 each coordinate Na(+).

Belongs to the fluoride channel Fluc/FEX (TC 1.A.43) family.

It is found in the cell inner membrane. The enzyme catalyses fluoride(in) = fluoride(out). With respect to regulation, na(+) is not transported, but it plays an essential structural role and its presence is essential for fluoride channel function. In terms of biological role, fluoride-specific ion channel. Important for reducing fluoride concentration in the cell, thus reducing its toxicity. In Xanthomonas oryzae pv. oryzae (strain MAFF 311018), this protein is Fluoride-specific ion channel FluC.